We begin with the raw amino-acid sequence, 99 residues long: RNA-binding protein Hfq (99 aa).

A Sm domain is found at 10 to 71 (DLFLNQLRKE…ISSILPSKPI (62 aa)). Residues 77-99 (VQNSQVQNTASQQSNNNQNQESK) form a disordered region.

The protein belongs to the Hfq family. As to quaternary structure, homohexamer.

RNA chaperone that binds small regulatory RNA (sRNAs) and mRNAs to facilitate mRNA translational regulation in response to envelope stress, environmental stress and changes in metabolite concentrations. Also binds with high specificity to tRNAs. In Caldicellulosiruptor saccharolyticus (strain ATCC 43494 / DSM 8903 / Tp8T 6331), this protein is RNA-binding protein Hfq.